A 105-amino-acid chain; its full sequence is Pyrimidine/purine nucleoside phosphorylase (105 aa).

Belongs to the nucleoside phosphorylase PpnP family.

The catalysed reaction is a purine D-ribonucleoside + phosphate = a purine nucleobase + alpha-D-ribose 1-phosphate. It catalyses the reaction adenosine + phosphate = alpha-D-ribose 1-phosphate + adenine. It carries out the reaction cytidine + phosphate = cytosine + alpha-D-ribose 1-phosphate. The enzyme catalyses guanosine + phosphate = alpha-D-ribose 1-phosphate + guanine. The catalysed reaction is inosine + phosphate = alpha-D-ribose 1-phosphate + hypoxanthine. It catalyses the reaction thymidine + phosphate = 2-deoxy-alpha-D-ribose 1-phosphate + thymine. It carries out the reaction uridine + phosphate = alpha-D-ribose 1-phosphate + uracil. The enzyme catalyses xanthosine + phosphate = alpha-D-ribose 1-phosphate + xanthine. In terms of biological role, catalyzes the phosphorolysis of diverse nucleosides, yielding D-ribose 1-phosphate and the respective free bases. Can use uridine, adenosine, guanosine, cytidine, thymidine, inosine and xanthosine as substrates. Also catalyzes the reverse reactions. This is Pyrimidine/purine nucleoside phosphorylase from Ralstonia pickettii (strain 12J).